A 258-amino-acid polypeptide reads, in one-letter code: Aspartate/glutamate leucyltransferase (258 aa).

Belongs to the R-transferase family. Bpt subfamily.

The protein resides in the cytoplasm. The enzyme catalyses N-terminal L-glutamyl-[protein] + L-leucyl-tRNA(Leu) = N-terminal L-leucyl-L-glutamyl-[protein] + tRNA(Leu) + H(+). It carries out the reaction N-terminal L-aspartyl-[protein] + L-leucyl-tRNA(Leu) = N-terminal L-leucyl-L-aspartyl-[protein] + tRNA(Leu) + H(+). In terms of biological role, functions in the N-end rule pathway of protein degradation where it conjugates Leu from its aminoacyl-tRNA to the N-termini of proteins containing an N-terminal aspartate or glutamate. The protein is Aspartate/glutamate leucyltransferase of Bradyrhizobium sp. (strain ORS 278).